Consider the following 147-residue polypeptide: 3-dehydroquinate dehydratase (147 aa).

Catalysis depends on Tyr-24, which acts as the Proton acceptor. Residues Asn-75, His-81, and Asp-88 each coordinate substrate. His-101 (proton donor) is an active-site residue. Residues 102–103 (IS) and Arg-112 contribute to the substrate site.

The protein belongs to the type-II 3-dehydroquinase family. Homododecamer.

The enzyme catalyses 3-dehydroquinate = 3-dehydroshikimate + H2O. The protein operates within metabolic intermediate biosynthesis; chorismate biosynthesis; chorismate from D-erythrose 4-phosphate and phosphoenolpyruvate: step 3/7. In terms of biological role, catalyzes a trans-dehydration via an enolate intermediate. This Cereibacter sphaeroides (strain KD131 / KCTC 12085) (Rhodobacter sphaeroides) protein is 3-dehydroquinate dehydratase.